The primary structure comprises 330 residues: Phosphate acyltransferase (330 aa).

The protein belongs to the PlsX family. In terms of assembly, homodimer. Probably interacts with PlsY.

It is found in the cytoplasm. It catalyses the reaction a fatty acyl-[ACP] + phosphate = an acyl phosphate + holo-[ACP]. It functions in the pathway lipid metabolism; phospholipid metabolism. Its function is as follows. Catalyzes the reversible formation of acyl-phosphate (acyl-PO(4)) from acyl-[acyl-carrier-protein] (acyl-ACP). This enzyme utilizes acyl-ACP as fatty acyl donor, but not acyl-CoA. The protein is Phosphate acyltransferase of Bacillus cereus (strain ATCC 14579 / DSM 31 / CCUG 7414 / JCM 2152 / NBRC 15305 / NCIMB 9373 / NCTC 2599 / NRRL B-3711).